Reading from the N-terminus, the 29-residue chain is Cytochrome b6-f complex subunit 8 (29 aa).

Residues 3 to 23 (MVSLAWAALMVVFTFSLSLVV) form a helical membrane-spanning segment.

This sequence belongs to the PetN family. In terms of assembly, the 4 large subunits of the cytochrome b6-f complex are cytochrome b6, subunit IV (17 kDa polypeptide, PetD), cytochrome f and the Rieske protein, while the 4 small subunits are PetG, PetL, PetM and PetN. The complex functions as a dimer.

Its subcellular location is the plastid. It localises to the chloroplast thylakoid membrane. Component of the cytochrome b6-f complex, which mediates electron transfer between photosystem II (PSII) and photosystem I (PSI), cyclic electron flow around PSI, and state transitions. This is Cytochrome b6-f complex subunit 8 from Cucumis sativus (Cucumber).